Here is a 97-residue protein sequence, read N- to C-terminus: Exodeoxyribonuclease 7 small subunit (97 aa).

The disordered stretch occupies residues 64–97 (NGQLHPAEEKGDDVSNNGVQNQGYKSQFLDGDVF). A compositionally biased stretch (polar residues) spans 77-88 (VSNNGVQNQGYK).

It belongs to the XseB family. In terms of assembly, heterooligomer composed of large and small subunits.

Its subcellular location is the cytoplasm. It catalyses the reaction Exonucleolytic cleavage in either 5'- to 3'- or 3'- to 5'-direction to yield nucleoside 5'-phosphates.. Functionally, bidirectionally degrades single-stranded DNA into large acid-insoluble oligonucleotides, which are then degraded further into small acid-soluble oligonucleotides. In Limosilactobacillus fermentum (strain NBRC 3956 / LMG 18251) (Lactobacillus fermentum), this protein is Exodeoxyribonuclease 7 small subunit.